Reading from the N-terminus, the 435-residue chain is Phospholipase A1 EG1, chloroplastic/mitochondrial (435 aa).

Residues 1–31 constitute a chloroplast and mitochondrion transit peptide; the sequence is MTLPRQCAAACRTGGGGGGVVRCRAVAAAGG. Residues 264-268 carry the GXSXG motif; that stretch reads GHSMG. Ser266 acts as the Acyl-ester intermediate in catalysis. Catalysis depends on charge relay system residues Asp324 and His371.

This sequence belongs to the AB hydrolase superfamily. Lipase family.

It is found in the mitochondrion. The protein resides in the plastid. The protein localises to the chloroplast. It carries out the reaction a 1,2-diacyl-sn-glycero-3-phosphocholine + H2O = a 2-acyl-sn-glycero-3-phosphocholine + a fatty acid + H(+). Functionally, phospholipase that releases free fatty acids from phospholipids. Catalyzes the initial step of jasmonate (JA) biosynthesis. Required for the biosynthesis of endogenous JA in seedling, inflorescence and spikelets. Not essential for JA biosynthesis after wounding. Mediates spikelet development and specification of empty-glume identity. Functions in a high temperature-dependent manner to maintain floral developmental robustness under heat stress conditions. Functions by safeguarding the expression of several floral identity genes, such as MADS1, MADS6 and G1. In Oryza sativa subsp. indica (Rice), this protein is Phospholipase A1 EG1, chloroplastic/mitochondrial.